Consider the following 343-residue polypeptide: Heat-inducible transcription repressor HrcA (343 aa).

This sequence belongs to the HrcA family.

Functionally, negative regulator of class I heat shock genes (grpE-dnaK-dnaJ and groELS operons). Prevents heat-shock induction of these operons. The chain is Heat-inducible transcription repressor HrcA from Mycolicibacterium gilvum (strain PYR-GCK) (Mycobacterium gilvum (strain PYR-GCK)).